Consider the following 94-residue polypeptide: DNA-directed RNA polymerase subunit omega (94 aa).

This sequence belongs to the RNA polymerase subunit omega family. In terms of assembly, the RNAP catalytic core consists of 2 alpha, 1 beta, 1 beta' and 1 omega subunit. When a sigma factor is associated with the core the holoenzyme is formed, which can initiate transcription.

The catalysed reaction is RNA(n) + a ribonucleoside 5'-triphosphate = RNA(n+1) + diphosphate. Promotes RNA polymerase assembly. Latches the N- and C-terminal regions of the beta' subunit thereby facilitating its interaction with the beta and alpha subunits. The chain is DNA-directed RNA polymerase subunit omega from Tolumonas auensis (strain DSM 9187 / NBRC 110442 / TA 4).